We begin with the raw amino-acid sequence, 207 residues long: Small ribosomal subunit protein uS4 (207 aa).

The S4 RNA-binding domain occupies 96–159; the sequence is RRLDNVVYRL…RASTFIADNI (64 aa).

The protein belongs to the universal ribosomal protein uS4 family. Part of the 30S ribosomal subunit. Contacts protein S5. The interaction surface between S4 and S5 is involved in control of translational fidelity.

Functionally, one of the primary rRNA binding proteins, it binds directly to 16S rRNA where it nucleates assembly of the body of the 30S subunit. Its function is as follows. With S5 and S12 plays an important role in translational accuracy. The sequence is that of Small ribosomal subunit protein uS4 from Leptospira borgpetersenii serovar Hardjo-bovis (strain JB197).